The chain runs to 612 residues: Elongation factor 4 (612 aa).

Positions 12 to 194 constitute a tr-type G domain; that stretch reads SRIRNFSIIA…QIVEKVPAPS (183 aa). GTP contacts are provided by residues 24-29 and 141-144; these read DHGKST and NKID.

Belongs to the TRAFAC class translation factor GTPase superfamily. Classic translation factor GTPase family. LepA subfamily.

It is found in the cell membrane. It carries out the reaction GTP + H2O = GDP + phosphate + H(+). In terms of biological role, required for accurate and efficient protein synthesis under certain stress conditions. May act as a fidelity factor of the translation reaction, by catalyzing a one-codon backward translocation of tRNAs on improperly translocated ribosomes. Back-translocation proceeds from a post-translocation (POST) complex to a pre-translocation (PRE) complex, thus giving elongation factor G a second chance to translocate the tRNAs correctly. Binds to ribosomes in a GTP-dependent manner. The sequence is that of Elongation factor 4 from Bacillus licheniformis (strain ATCC 14580 / DSM 13 / JCM 2505 / CCUG 7422 / NBRC 12200 / NCIMB 9375 / NCTC 10341 / NRRL NRS-1264 / Gibson 46).